We begin with the raw amino-acid sequence, 181 residues long: ATP synthase subunit delta (181 aa).

This sequence belongs to the ATPase delta chain family. As to quaternary structure, F-type ATPases have 2 components, F(1) - the catalytic core - and F(0) - the membrane proton channel. F(1) has five subunits: alpha(3), beta(3), gamma(1), delta(1), epsilon(1). F(0) has three main subunits: a(1), b(2) and c(10-14). The alpha and beta chains form an alternating ring which encloses part of the gamma chain. F(1) is attached to F(0) by a central stalk formed by the gamma and epsilon chains, while a peripheral stalk is formed by the delta and b chains.

It localises to the cell inner membrane. F(1)F(0) ATP synthase produces ATP from ADP in the presence of a proton or sodium gradient. F-type ATPases consist of two structural domains, F(1) containing the extramembraneous catalytic core and F(0) containing the membrane proton channel, linked together by a central stalk and a peripheral stalk. During catalysis, ATP synthesis in the catalytic domain of F(1) is coupled via a rotary mechanism of the central stalk subunits to proton translocation. Functionally, this protein is part of the stalk that links CF(0) to CF(1). It either transmits conformational changes from CF(0) to CF(1) or is implicated in proton conduction. This Orientia tsutsugamushi (strain Boryong) (Rickettsia tsutsugamushi) protein is ATP synthase subunit delta.